A 522-amino-acid polypeptide reads, in one-letter code: MSKIWEDAIKSNAWPFVEAKKILDSLNGQIPEKGYVLFETGYGPSGLPHIGTFGENARMVMVQKAFEQLSDIPTKLICFSDDMDGLRKVPSNIPNPEMVAQYMDMPLTSIPDTFGECESYGHYMNAKLRSFLDKFGFEYEFYSSTNCYKAGMFDEMLRMVLEKYDEIMELMLPTFREERKATYSPFMPICPKTGKVLQVPIEKWDAKAGTVTYKDKAGNYIEVPVTGGHCKLQWKPDFGMRWAALKVDYEMYGKDHLANARLYSEICRILGGKPPVQLCYELFLDENGEKISKSKGNSISIDDWLKYAPVESMALFMYQNPTRAKRLFFDVIPKNVDEYITFNQKYHLEEDRAKRFANPVYHIHHGNVPKIETFGITYSLLLNLTSVCNPSDKSVLWGFISKYEPKATPNTNPYLDHLAEFAIRYYNDFIKAHKSYLSPSEKHKVILQDILDMLSDIADQTEAEAIQKAIYDIGMKAGYENLRDYFKDLYQILLGQNEGPRLGTFIKLYGVQEMKKLVEGQL.

Residues 44-52 (PSGLPHIGT) carry the 'HIGH' region motif. The 'KMSKS' region motif lies at 290 to 294 (KISKS). Lys-293 is a binding site for ATP.

Belongs to the class-I aminoacyl-tRNA synthetase family.

The protein resides in the cytoplasm. It catalyses the reaction tRNA(Lys) + L-lysine + ATP = L-lysyl-tRNA(Lys) + AMP + diphosphate. The polypeptide is Lysine--tRNA ligase (Rickettsia africae (strain ESF-5)).